We begin with the raw amino-acid sequence, 504 residues long: Occludin (504 aa).

At 1–57 (MFSKKSYDGPPAGYGPPTGYGAPTADYGYGSPPPGSYYVDDAPQLFYKWTSPPGAVR) the chain is on the cytoplasmic side. In terms of domain architecture, MARVEL spans 51-253 (SPPGAVRGLQ…ICFFAQKTRS (203 aa)). Residues 58–80 (GLQAGVLVLCIAIFACVASTLAW) traverse the membrane as a helical segment. Residues 81 to 123 (DYGYGLGGAYGTGLGGFYGSNYYGSGLSYSYGYGGYYGGVNQR) are Extracellular-facing. Residues 124–148 (TANGFMIAMAVLCFLAQLGLLVAAL) form a helical membrane-spanning segment. The Cytoplasmic segment spans residues 149-158 (SKSGATRSRR). A helical membrane pass occupies residues 159 to 183 (FYLAVLVLSAVLAFVMLIASIVYIM). Residues 184–227 (GVNPQAQMSSGYYYSPLLAMCSQAYGSTYLNQYIYHYCTVDPQE) lie on the Extracellular side of the membrane. Cysteine 204 and cysteine 221 are joined by a disulfide. The helical transmembrane segment at 228–249 (AVAAVCGFLIVILLCLICFFAQ) threads the bilayer. Residues 250–504 (KTRSKIWRYG…MVSAYDKVRG (255 aa)) lie on the Cytoplasmic side of the membrane. Residues 324–396 (PSGTYSSRGD…VESSDERDQE (73 aa)) form a disordered region. Positions 361–370 (PARRGRRRRR) are enriched in basic residues. Phosphotyrosine occurs at positions 379 and 383. An interaction with TJP1 region spans residues 379–385 (YETDYTT). Residues 396–504 (EQWASLYPPI…MVSAYDKVRG (109 aa)) enclose the OCEL domain. Residues 412–471 (QRYKQEFDTDLKRYKQLCAEMDSINDRLNQLSRRLDSITEDSPQYQDVAEEYNQLKDLKR) are a coiled coil.

This sequence belongs to the ELL/occludin family. Interacts with TJP1 and TJP3. Post-translationally, phosphorylated. As to expression, localized at tight junctions of both epithelial and endothelial cells. Highly expressed in lung and liver. Expressed at a lower level in brain.

It localises to the cell membrane. The protein resides in the cell junction. Its subcellular location is the tight junction. Its function is as follows. May play a role in the formation and regulation of the tight junction (TJ) paracellular permeability barrier. Interacts with ZO-1. The polypeptide is Occludin (OCLN) (Gallus gallus (Chicken)).